Reading from the N-terminus, the 379-residue chain is MTNIRKSHPLLKIINNSLIDLPTPPNISSLWNFGSLLGACLTIQIITGLFLAMHYTADTTTAFSSVAHICRDVNYGWTIRYLHANGASMFFLCLFIHVGRGLYYGSFTLLETWNVGIILLFSVMATAFMGYVLPWGQMSFWGATVITNLLSAIPYVGTDLVEWIWGGFSVSKATLTRFFALHFILPFIISALVMIHLLFLHETGSNNPLGMPSNSDKIPFHPYYTTKDFLGLLLLTLLLMTMALFYPDLLGDPDNYTPANPLNTPPHIKPEWYFLFAYAILRSIPNKLGGVMALILSILILMVIPFLQPNKQQTMMFRPLSQFLFWILVADLLTLTWIGGQPVEEPFINIGQMASMLYFSLMVFIMPTTCLIENKMLKW.

4 helical membrane passes run 33-53 (FGSLLGACLTIQIITGLFLAM), 77-98 (WTIRYLHANGASMFFLCLFIHV), 113-133 (WNVGIILLFSVMATAFMGYVL), and 178-198 (FFALHFILPFIISALVMIHLL). Heme b contacts are provided by His-83 and His-97. Heme b is bound by residues His-182 and His-196. His-201 serves as a coordination point for a ubiquinone. Helical transmembrane passes span 226–246 (TKDFLGLLLLTLLLMTMALFY), 288–308 (LGGVMALILSILILMVIPFLQ), 320–340 (LSQFLFWILVADLLTLTWIGG), and 347–367 (FINIGQMASMLYFSLMVFIMP).

This sequence belongs to the cytochrome b family. As to quaternary structure, the cytochrome bc1 complex contains 11 subunits: 3 respiratory subunits (MT-CYB, CYC1 and UQCRFS1), 2 core proteins (UQCRC1 and UQCRC2) and 6 low-molecular weight proteins (UQCRH/QCR6, UQCRB/QCR7, UQCRQ/QCR8, UQCR10/QCR9, UQCR11/QCR10 and a cleavage product of UQCRFS1). This cytochrome bc1 complex then forms a dimer. It depends on heme b as a cofactor.

The protein resides in the mitochondrion inner membrane. Component of the ubiquinol-cytochrome c reductase complex (complex III or cytochrome b-c1 complex) that is part of the mitochondrial respiratory chain. The b-c1 complex mediates electron transfer from ubiquinol to cytochrome c. Contributes to the generation of a proton gradient across the mitochondrial membrane that is then used for ATP synthesis. The chain is Cytochrome b (MT-CYB) from Lepilemur dorsalis (Grey-backed sportive lemur).